A 110-amino-acid polypeptide reads, in one-letter code: UPF0060 membrane protein Swit_0423 (110 aa).

A run of 4 helical transmembrane segments spans residues 6–26 (LFIFVAAALCEIGGCFAFWAW), 29–49 (LGKSPLWAVGGVGLLILFAWL), 61–81 (AFAAYGGIYICASLGWMWAVE), and 90–110 (LIGVLLCAVGSAVILLGPRTA).

This sequence belongs to the UPF0060 family.

The protein resides in the cell inner membrane. The polypeptide is UPF0060 membrane protein Swit_0423 (Rhizorhabdus wittichii (strain DSM 6014 / CCUG 31198 / JCM 15750 / NBRC 105917 / EY 4224 / RW1) (Sphingomonas wittichii)).